A 185-amino-acid chain; its full sequence is Ribosome-recycling factor (185 aa).

This sequence belongs to the RRF family.

The protein localises to the cytoplasm. Its function is as follows. Responsible for the release of ribosomes from messenger RNA at the termination of protein biosynthesis. May increase the efficiency of translation by recycling ribosomes from one round of translation to another. This Alkalilimnicola ehrlichii (strain ATCC BAA-1101 / DSM 17681 / MLHE-1) protein is Ribosome-recycling factor.